Consider the following 688-residue polypeptide: MTTETLLIELGTEELPPKSLKTLATAFYDNIKGQLDSHNLSYSDIKWFATPRRFAVQVFDLVEKQDDKIVEKRGPAVNVAFDDAGNASKAAQGWARSNGIEVDQAERLVTGKGEWLLHRATVSGKAVVELIPDMVTTALNKLPIAKPMRWGAERTQFIRPVQTLTMLFGSDIIAGEALGVSSSNQVQGHRFHHEGLVTINHANDYQAELAKAYVEVDFNERQNKIVAQIKQVANDIDAVALIDEELLNEVTALVEWPVTLVGTFDEDFLNVPAEPLIYSMKDHQKYFPVTDKNGQLVNKFIFVTNIESKDPNTIIFGNEKVIRPRLADAEFFFKTDKKQSLESRLKSLESVLFQKQLGTLKAKSERIASLSQFIAEQLNENAQDAYRAGLLSKTDLMSDMVLEFPQVQGTMGKYYALHDGENENIAQALEDQYRPRFAGDSLPEANIGCAVAISDKIDSLVGIFGINQAPKGDKDPFALRRAAIGSIRIIIEKQLDLDLSTLINKSIELFGDKLVNENTATDVLEFIMGRFRAFYQEQGISVDVIQAVLAKKPSAPLDFEKRIKAVTFFGELPEAATLAAANKRVGNILAKFDGELYQSFNTDLATEQAERDLADIYRDISLKVAPLMADKNYQAALSELAQLKAPIDTFFDGVMVMSDDEAVKINRLTLLNQIRNSFFAIADISVLQ.

This sequence belongs to the class-II aminoacyl-tRNA synthetase family. In terms of assembly, tetramer of two alpha and two beta subunits.

Its subcellular location is the cytoplasm. The catalysed reaction is tRNA(Gly) + glycine + ATP = glycyl-tRNA(Gly) + AMP + diphosphate. This is Glycine--tRNA ligase beta subunit from Colwellia psychrerythraea (strain 34H / ATCC BAA-681) (Vibrio psychroerythus).